The primary structure comprises 152 residues: Xanthine-guanine phosphoribosyltransferase (152 aa).

Residues 37 to 38 (RG), R69, and 88 to 96 (DDLVDSGDT) contribute to the 5-phospho-alpha-D-ribose 1-diphosphate site. Residue R69 participates in GMP binding. Residue D89 participates in Mg(2+) binding. Residues D92 and I135 each contribute to the guanine site. Xanthine is bound by residues D92 and I135. GMP-binding positions include 92 to 96 (DSGDT) and 134 to 135 (WI).

The protein belongs to the purine/pyrimidine phosphoribosyltransferase family. XGPT subfamily. In terms of assembly, homotetramer. Mg(2+) is required as a cofactor.

The protein resides in the cell inner membrane. The catalysed reaction is GMP + diphosphate = guanine + 5-phospho-alpha-D-ribose 1-diphosphate. It carries out the reaction XMP + diphosphate = xanthine + 5-phospho-alpha-D-ribose 1-diphosphate. It catalyses the reaction IMP + diphosphate = hypoxanthine + 5-phospho-alpha-D-ribose 1-diphosphate. It functions in the pathway purine metabolism; GMP biosynthesis via salvage pathway; GMP from guanine: step 1/1. It participates in purine metabolism; XMP biosynthesis via salvage pathway; XMP from xanthine: step 1/1. Purine salvage pathway enzyme that catalyzes the transfer of the ribosyl-5-phosphate group from 5-phospho-alpha-D-ribose 1-diphosphate (PRPP) to the N9 position of the 6-oxopurines guanine and xanthine to form the corresponding ribonucleotides GMP (guanosine 5'-monophosphate) and XMP (xanthosine 5'-monophosphate), with the release of PPi. To a lesser extent, also acts on hypoxanthine. The chain is Xanthine-guanine phosphoribosyltransferase from Aliivibrio fischeri (strain ATCC 700601 / ES114) (Vibrio fischeri).